A 1029-amino-acid polypeptide reads, in one-letter code: Toll-like receptor 9 (1029 aa).

Positions 1–24 (MGPYCAPHPLSLLVQAAALAAALA) are cleaved as a signal peptide. Residues 25–815 (QGTLPAFLPC…LCLDETLSLD (791 aa)) are Extracellular-facing. Cys34 and Cys44 are disulfide-bonded. 46–50 (WLFLK) provides a ligand contact to DNA. LRR repeat units lie at residues 61–84 (RANV…DFVH), 86–109 (SNLR…HFPC), 121–146 (VPTL…SLVS), 149–165 (LSRT…FTGL), 166–189 (HALR…AVEV), 197–220 (LGNL…LPPS), 222–241 (DTLL…DLAN), 242–267 (LTAL…CREC), 282–305 (LSRL…WFRG), 307–331 (GRLQ…IFRN), 332–355 (LTQL…HLQL), 362–385 (LVSL…TLRP), 389–412 (LPKL…IFGA), 414–439 (PSLL…LGEV), 469–492 (CNLN…MFTR), 494–517 (SRLQ…QFVP), 518–541 (LTRL…SFTE), 543–570 (PQLE…SFVA), 572–596 (LPSL…LSSA), 598–620 (LRAL…LYLC), 625–648 (LRNL…HLDN), 650–673 (PKSL…SLTV), 674–697 (LPQL…SLPP), 699–721 (TRLQ…FFVL), 722–745 (ANRL…WFGR), and 747–770 (TETL…AFVD). Residue Asn63 is glycosylated (N-linked (GlcNAc...) asparagine). DNA is bound by residues 71 to 76 (SNRIHH) and 94 to 108 (KWNC…MHFP). Cys97 and Cys109 are joined by a disulfide. Asn128 carries N-linked (GlcNAc...) asparagine glycosylation. Residues Tyr131, Arg151, and 178–180 (YYK) contribute to the DNA site. An intrachain disulfide couples Cys177 to Cys183. Asn199 is a glycosylation site (N-linked (GlcNAc...) asparagine). Tyr207 provides a ligand contact to DNA. 2 N-linked (GlcNAc...) asparagine glycosylation sites follow: Asn209 and Asn241. 2 cysteine pairs are disulfide-bonded: Cys254/Cys267 and Cys257/Cys264. Cys257 is lipidated: S-palmitoyl cysteine. Position 261 (Arg261) interacts with DNA. The S-palmitoyl cysteine moiety is linked to residue Cys264. N-linked (GlcNAc...) asparagine glycans are attached at residues Asn331, Asn339, and Asn380. Cys469 and Cys498 are disulfide-bonded. Asn472 and Asn511 each carry an N-linked (GlcNAc...) asparagine glycan. Asn565 is a glycosylation site (N-linked (GlcNAc...) asparagine). N-linked (GlcNAc...) asparagine glycosylation is found at Asn667 and Asn692. Asn729 carries N-linked (GlcNAc...) asparagine glycosylation. 2 cysteine pairs are disulfide-bonded: Cys762/Cys788 and Cys764/Cys807. Residues 816–836 (CFGFSLLMVALGLAVPMLHHL) form a helical membrane-spanning segment. The Cytoplasmic segment spans residues 837 to 1029 (CGWDLWYCFH…NFCRGPTTAE (193 aa)). Residues 864-1009 (LLYDAFVVFD…SFWANLGMAL (146 aa)) form the TIR domain.

It belongs to the Toll-like receptor family. In terms of assembly, monomer and homodimer. Exists as a monomer in the absence of unmethylated cytidine-phosphate-guanosine (CpG) ligand. Proteolytic processing of an insertion loop (Z-loop) is required for homodimerization upon binding to the unmethylated CpG ligand leading to its activation. Interacts with MYD88 via their respective TIR domains. Interacts with BTK. Interacts (via transmembrane domain) with UNC93B1. Interacts with CD300LH; the interaction may promote full activation of TLR9-triggered innate responses. Interacts with CNPY3 and HSP90B1; this interaction is required for proper folding in the endoplasmic reticulum. Interacts with SMPDL3B. Interacts with CD82; this interaction is essential for TLR9-dependent myddosome formation in response to CpG stimulation. Post-translationally, activated by proteolytic cleavage of the flexible loop between repeats LRR14 and LRR15 within the ectodomain. Cleavage requires UNC93B1. Proteolytically processed by first removing the majority of the ectodomain by either asparagine endopeptidase (AEP) or a cathepsin followed by a trimming event that is solely cathepsin mediated and required for optimal receptor signaling. Palmitoylated by ZDHHC3 in the Golgi regulates TLR9 trafficking from the Golgi to endosomes. Depalmitoylation by PPT1 controls the release of TLR9 from UNC93B1 in endosomes.

It localises to the endoplasmic reticulum membrane. The protein localises to the endosome. Its subcellular location is the lysosome. The protein resides in the cytoplasmic vesicle. It is found in the phagosome. Key component of innate and adaptive immunity. TLRs (Toll-like receptors) control host immune response against pathogens through recognition of molecular patterns specific to microorganisms. TLR9 is a nucleotide-sensing TLR which is activated by unmethylated cytidine-phosphate-guanosine (CpG) dinucleotides. Acts via MYD88 and TRAF6, leading to NF-kappa-B activation, cytokine secretion and the inflammatory response. Upon CpG stimulation, induces B-cell proliferation, activation, survival and antibody production. This is Toll-like receptor 9 (TLR9) from Ovis aries (Sheep).